A 305-amino-acid chain; its full sequence is tRNA dimethylallyltransferase (305 aa).

9 to 16 (GPTASGKS) lines the ATP pocket. Substrate is bound at residue 11–16 (TASGKS). Residues 34-37 (DSKQ) form an interaction with substrate tRNA region.

This sequence belongs to the IPP transferase family. As to quaternary structure, monomer. The cofactor is Mg(2+).

The catalysed reaction is adenosine(37) in tRNA + dimethylallyl diphosphate = N(6)-dimethylallyladenosine(37) in tRNA + diphosphate. Its function is as follows. Catalyzes the transfer of a dimethylallyl group onto the adenine at position 37 in tRNAs that read codons beginning with uridine, leading to the formation of N6-(dimethylallyl)adenosine (i(6)A). The chain is tRNA dimethylallyltransferase from Anaplasma marginale (strain St. Maries).